The sequence spans 62 residues: Potassium channel toxin alpha-KTx 22.1 (62 aa).

The first 18 residues, 1–18 (MQKLFIVFVLFCILRLDA), serve as a signal peptide directing secretion. 3 disulfide bridges follow: cysteine 28-cysteine 46, cysteine 33-cysteine 59, and cysteine 37-cysteine 61.

The protein belongs to the short scorpion toxin superfamily. Potassium channel inhibitor family. Alpha-KTx 22 subfamily. As to expression, expressed by the venom gland.

The protein localises to the secreted. Its function is as follows. May block potassium channels. The protein is Potassium channel toxin alpha-KTx 22.1 of Olivierus martensii (Manchurian scorpion).